The following is a 370-amino-acid chain: Putative agmatine deiminase (370 aa).

Over residues methionine 1–glycine 19 the composition is skewed to polar residues. The disordered stretch occupies residues methionine 1–phenylalanine 20. Cysteine 361 serves as the catalytic Amidino-cysteine intermediate.

Belongs to the agmatine deiminase family.

It carries out the reaction agmatine + H2O = N-carbamoylputrescine + NH4(+). This Shewanella frigidimarina (strain NCIMB 400) protein is Putative agmatine deiminase.